The chain runs to 1153 residues: Otoancorin (1153 aa).

A signal peptide spans 1 to 22; sequence MSQEPTTYSLFLFLFLSHGVSS. Residue Asn156 is glycosylated (N-linked (GlcNAc...) asparagine). Asn211 carries N-linked (GlcNAc...) (complex) asparagine glycosylation. N-linked (GlcNAc...) asparagine glycans are attached at residues Asn244, Asn289, Asn321, Asn394, Asn398, Asn460, Asn544, Asn812, Asn911, and Asn974. Residues 1109–1128 are disordered; the sequence is HSWQDAPASAGPTRTSSSRS. Ala1130 is lipidated: GPI-anchor amidated alanine. A propeptide spans 1131–1153 (removed in mature form); it reads GALQSWGLWLGCPLLVLMAKLLW.

The protein belongs to the stereocilin family.

It localises to the apical cell membrane. The protein localises to the secreted. The protein resides in the extracellular space. It is found in the extracellular matrix. In terms of biological role, may act as an adhesion molecule. The polypeptide is Otoancorin (OTOA) (Homo sapiens (Human)).